We begin with the raw amino-acid sequence, 189 residues long: uncharacterized protein (189 aa).

This is an uncharacterized protein from Saccharomyces cerevisiae (strain ATCC 204508 / S288c) (Baker's yeast).